The primary structure comprises 577 residues: Arginine--tRNA ligase (577 aa).

Positions 122–132 match the 'HIGH' region motif; sequence PNVAKEMHVGH.

Belongs to the class-I aminoacyl-tRNA synthetase family. Monomer.

It localises to the cytoplasm. The enzyme catalyses tRNA(Arg) + L-arginine + ATP = L-arginyl-tRNA(Arg) + AMP + diphosphate. This is Arginine--tRNA ligase from Escherichia coli O1:K1 / APEC.